The sequence spans 268 residues: Glucosamine-6-phosphate deaminase (268 aa).

The active-site Proton acceptor; for enolization step is aspartate 72. The active-site For ring-opening step is aspartate 141. Histidine 143 functions as the Proton acceptor; for ring-opening step in the catalytic mechanism. Catalysis depends on glutamate 148, which acts as the For ring-opening step.

It belongs to the glucosamine/galactosamine-6-phosphate isomerase family. NagB subfamily. In terms of assembly, homohexamer.

The catalysed reaction is alpha-D-glucosamine 6-phosphate + H2O = beta-D-fructose 6-phosphate + NH4(+). It participates in amino-sugar metabolism; N-acetylneuraminate degradation; D-fructose 6-phosphate from N-acetylneuraminate: step 5/5. With respect to regulation, allosterically activated by N-acetylglucosamine 6-phosphate (GlcNAc6P). In terms of biological role, catalyzes the reversible isomerization-deamination of glucosamine 6-phosphate (GlcN6P) to form fructose 6-phosphate (Fru6P) and ammonium ion. The protein is Glucosamine-6-phosphate deaminase of Histophilus somni (strain 2336) (Haemophilus somnus).